Consider the following 87-residue polypeptide: Large ribosomal subunit protein bL31B (87 aa).

This sequence belongs to the bacterial ribosomal protein bL31 family. Type B subfamily. In terms of assembly, part of the 50S ribosomal subunit.

This chain is Large ribosomal subunit protein bL31B, found in Pseudomonas paraeruginosa (strain DSM 24068 / PA7) (Pseudomonas aeruginosa (strain PA7)).